The primary structure comprises 88 residues: Small ribosomal subunit protein uS15 (88 aa).

The protein belongs to the universal ribosomal protein uS15 family. In terms of assembly, part of the 30S ribosomal subunit. Forms a bridge to the 50S subunit in the 70S ribosome, contacting the 23S rRNA.

Its function is as follows. One of the primary rRNA binding proteins, it binds directly to 16S rRNA where it helps nucleate assembly of the platform of the 30S subunit by binding and bridging several RNA helices of the 16S rRNA. In terms of biological role, forms an intersubunit bridge (bridge B4) with the 23S rRNA of the 50S subunit in the ribosome. The polypeptide is Small ribosomal subunit protein uS15 (Psychrobacter cryohalolentis (strain ATCC BAA-1226 / DSM 17306 / VKM B-2378 / K5)).